Reading from the N-terminus, the 157-residue chain is Arginine regulator (157 aa).

The protein belongs to the ArgR family.

The protein resides in the cytoplasm. It participates in amino-acid degradation; L-arginine degradation via ADI pathway. In terms of biological role, regulates the transcription of the arc operon, involved in arginine catabolism. The sequence is that of Arginine regulator (argR1) from Streptococcus pyogenes serotype M3 (strain ATCC BAA-595 / MGAS315).